A 450-amino-acid chain; its full sequence is Membrane-bound lytic murein transglycosylase F 2 (450 aa).

A signal peptide spans 1–20 (MRTWIAILAVVLVLLLNACT). The interval 21-261 (DGPEDGPRLE…AMENRYYTYV (241 aa)) is non-LT domain. Residues 262–450 (GEFDFVDLRA…YRDVIRQAFE (189 aa)) form an LT domain region. Glu308 is a catalytic residue.

This sequence in the N-terminal section; belongs to the bacterial solute-binding protein 3 family. In the C-terminal section; belongs to the transglycosylase Slt family.

It localises to the cell outer membrane. It carries out the reaction Exolytic cleavage of the (1-&gt;4)-beta-glycosidic linkage between N-acetylmuramic acid (MurNAc) and N-acetylglucosamine (GlcNAc) residues in peptidoglycan, from either the reducing or the non-reducing ends of the peptidoglycan chains, with concomitant formation of a 1,6-anhydrobond in the MurNAc residue.. Functionally, murein-degrading enzyme that degrades murein glycan strands and insoluble, high-molecular weight murein sacculi, with the concomitant formation of a 1,6-anhydromuramoyl product. Lytic transglycosylases (LTs) play an integral role in the metabolism of the peptidoglycan (PG) sacculus. Their lytic action creates space within the PG sacculus to allow for its expansion as well as for the insertion of various structures such as secretion systems and flagella. This chain is Membrane-bound lytic murein transglycosylase F 2, found in Alkalilimnicola ehrlichii (strain ATCC BAA-1101 / DSM 17681 / MLHE-1).